The sequence spans 271 residues: Extent of cell elongation protein 1 (271 aa).

The N-terminal stretch at 1-18 (MKFSKIACATVFALSSQA) is a signal peptide. Residues 62 to 82 (SIIGIIMGILGNIPQVIQIIM) form a helical membrane-spanning segment.

As to quaternary structure, polymerizes in solution to form membrane pores. Post-translationally, cleavage by KEX2 generates 8 peptides ECE1-I to ECE1-VIII, all terminating in Lys-Arg. Only peptide ECE1-III, called candidalysin, shows toxin activity.

It localises to the secreted. The protein resides in the host cell membrane. Secreted protein cleaved by KEX2 in 8 similar peptides (ECE1-I to ECE1-VIII). Stimulates biofilm formation. Functionally, acts as a cytolytic peptide toxin that directly damages host epithelial membranes, triggers a danger response signaling pathway and activates epithelial immunity. Polymerizes in solution to form membrane pores to damage epithelial cells. Induces calcium influx, oxidative stress, mitochondrial dysfunction and ATP depletion in host cells, leading to epithelial necrosis. Serves as a danger signal that potentiates the immune response, and more specifically IL-17 response. Induces cytokine/chemokine secretion by host (especially CCL2/3/4, CXCL1 and S100A8), neutrophil recruitment, and promotes mortality in zebrafish and murine models of systemic fungal infection. Mediates distinct epithelial inflammatory responses through p38, EGFR-ERK and TREM-1/DAP12 pathways. Acts as one of the hypha-derived drivers of NLRP3 inflammasome responses in primary macrophages and thus contributes to the capacity to induce maturation and secretion of IL-1beta from primary macrophages. Stimulates mast cells by mediating cross-talk between signaling pathways activated by the dectin-1 receptor and MAPKs. Enables escape via the gasdermin-mediated pyroptosis, as well as a cell lysis pathway associated with macrophage extracellular trap formation termed ETosis. Acts as the main hemolytic factor of C.albicans. As an exotoxine, also promotes alcohol-associated liver disease or oral carcinogenesis. The protein is Extent of cell elongation protein 1 of Candida albicans (strain SC5314 / ATCC MYA-2876) (Yeast).